The following is a 98-amino-acid chain: NADH-ubiquinone oxidoreductase chain 4L (98 aa).

Transmembrane regions (helical) follow at residues 2-22 (PSIFTNIILAFATALLGTLVF), 29-49 (SLLCLEGMMLSMFVLSTLIIL), and 61-81 (ILLLVFAACEAAVGLALLVMV).

Belongs to the complex I subunit 4L family. Core subunit of respiratory chain NADH dehydrogenase (Complex I) which is composed of 45 different subunits.

The protein localises to the mitochondrion inner membrane. The enzyme catalyses a ubiquinone + NADH + 5 H(+)(in) = a ubiquinol + NAD(+) + 4 H(+)(out). Functionally, core subunit of the mitochondrial membrane respiratory chain NADH dehydrogenase (Complex I) which catalyzes electron transfer from NADH through the respiratory chain, using ubiquinone as an electron acceptor. Part of the enzyme membrane arm which is embedded in the lipid bilayer and involved in proton translocation. The sequence is that of NADH-ubiquinone oxidoreductase chain 4L (MT-ND4L) from Propithecus diadema diadema (Diademed sifaka).